Consider the following 426-residue polypeptide: Serine hydroxymethyltransferase 1 (426 aa).

(6S)-5,6,7,8-tetrahydrofolate-binding positions include leucine 121 and 125–127 (GHL). Lysine 230 carries the N6-(pyridoxal phosphate)lysine modification. 355 to 357 (SPF) contributes to the (6S)-5,6,7,8-tetrahydrofolate binding site.

Belongs to the SHMT family. In terms of assembly, homodimer. Pyridoxal 5'-phosphate serves as cofactor.

Its subcellular location is the cytoplasm. It catalyses the reaction (6R)-5,10-methylene-5,6,7,8-tetrahydrofolate + glycine + H2O = (6S)-5,6,7,8-tetrahydrofolate + L-serine. Its pathway is one-carbon metabolism; tetrahydrofolate interconversion. It functions in the pathway amino-acid biosynthesis; glycine biosynthesis; glycine from L-serine: step 1/1. In terms of biological role, catalyzes the reversible interconversion of serine and glycine with tetrahydrofolate (THF) serving as the one-carbon carrier. This reaction serves as the major source of one-carbon groups required for the biosynthesis of purines, thymidylate, methionine, and other important biomolecules. Also exhibits THF-independent aldolase activity toward beta-hydroxyamino acids, producing glycine and aldehydes, via a retro-aldol mechanism. In Hahella chejuensis (strain KCTC 2396), this protein is Serine hydroxymethyltransferase 1.